The sequence spans 275 residues: NH(3)-dependent NAD(+) synthetase (275 aa).

46–53 lines the ATP pocket; it reads GISGGQDS. D52 lines the Mg(2+) pocket. R140 is a binding site for deamido-NAD(+). T160 serves as a coordination point for ATP. Position 165 (E165) interacts with Mg(2+). 2 residues coordinate deamido-NAD(+): K173 and D180. 2 residues coordinate ATP: K189 and T211. A deamido-NAD(+)-binding site is contributed by 260 to 261; sequence HK.

Belongs to the NAD synthetase family. In terms of assembly, homodimer.

It carries out the reaction deamido-NAD(+) + NH4(+) + ATP = AMP + diphosphate + NAD(+) + H(+). Its pathway is cofactor biosynthesis; NAD(+) biosynthesis; NAD(+) from deamido-NAD(+) (ammonia route): step 1/1. In terms of biological role, catalyzes the ATP-dependent amidation of deamido-NAD to form NAD. Uses ammonia as a nitrogen source. The chain is NH(3)-dependent NAD(+) synthetase from Escherichia coli O7:K1 (strain IAI39 / ExPEC).